The sequence spans 165 residues: Large ribosomal subunit protein uL10 (165 aa).

Belongs to the universal ribosomal protein uL10 family. Part of the ribosomal stalk of the 50S ribosomal subunit. The N-terminus interacts with L11 and the large rRNA to form the base of the stalk. The C-terminus forms an elongated spine to which L12 dimers bind in a sequential fashion forming a multimeric L10(L12)X complex.

In terms of biological role, forms part of the ribosomal stalk, playing a central role in the interaction of the ribosome with GTP-bound translation factors. The protein is Large ribosomal subunit protein uL10 of Shewanella pealeana (strain ATCC 700345 / ANG-SQ1).